The sequence spans 62 residues: Large ribosomal subunit protein bL32 (62 aa).

Basic residues predominate over residues 1-18 (MGVPKKRTSKMRRDRRRA). Positions 1 to 22 (MGVPKKRTSKMRRDRRRAANNN) are disordered.

The protein belongs to the bacterial ribosomal protein bL32 family.

The sequence is that of Large ribosomal subunit protein bL32 from Myxococcus xanthus (strain DK1622).